A 41-amino-acid polypeptide reads, in one-letter code: Disintegrin viperistatin (41 aa).

4 disulfides stabilise this stretch: cysteine 1–cysteine 10, cysteine 6–cysteine 29, cysteine 7–cysteine 34, and cysteine 19–cysteine 36. In terms of domain architecture, Disintegrin spans 1 to 41 (CTTGPCCRQCKLKPAGTTCWKTSRTSHYCTGKSCDCPVYQG). The Cell attachment site; atypical (KTS) motif lies at 21–23 (KTS).

Monomer. As to expression, expressed by the venom gland.

Its subcellular location is the secreted. In terms of biological role, potent and highly selective inhibitor of alpha-1/beta-1 (ITGA1/ITGB1) integrin binding to collagen I and IV. Is about 25-fold more potent than obtustatin inhibiting the binding of this integrin to collagen IV. This is Disintegrin viperistatin from Daboia palaestinae (Palestine viper).